The following is a 566-amino-acid chain: Glutamate--tRNA ligase (566 aa).

Residues 104–114 (PNPDGPLHLGN) carry the 'HIGH' region motif.

Belongs to the class-I aminoacyl-tRNA synthetase family. Glutamate--tRNA ligase type 2 subfamily.

It is found in the cytoplasm. It carries out the reaction tRNA(Glu) + L-glutamate + ATP = L-glutamyl-tRNA(Glu) + AMP + diphosphate. Its function is as follows. Catalyzes the attachment of glutamate to tRNA(Glu) in a two-step reaction: glutamate is first activated by ATP to form Glu-AMP and then transferred to the acceptor end of tRNA(Glu). This is Glutamate--tRNA ligase from Metallosphaera sedula (strain ATCC 51363 / DSM 5348 / JCM 9185 / NBRC 15509 / TH2).